The following is a 70-amino-acid chain: Large ribosomal subunit protein bL31 (70 aa).

Residues cysteine 16, cysteine 18, cysteine 37, and cysteine 40 each coordinate Zn(2+).

It belongs to the bacterial ribosomal protein bL31 family. Type A subfamily. Part of the 50S ribosomal subunit. Requires Zn(2+) as cofactor.

Functionally, binds the 23S rRNA. In Klebsiella pneumoniae (strain 342), this protein is Large ribosomal subunit protein bL31.